The chain runs to 1342 residues: DNA-directed RNA polymerase subunit beta (1342 aa).

This sequence belongs to the RNA polymerase beta chain family. The RNAP catalytic core consists of 2 alpha, 1 beta, 1 beta' and 1 omega subunit. When a sigma factor is associated with the core the holoenzyme is formed, which can initiate transcription.

It carries out the reaction RNA(n) + a ribonucleoside 5'-triphosphate = RNA(n+1) + diphosphate. Functionally, DNA-dependent RNA polymerase catalyzes the transcription of DNA into RNA using the four ribonucleoside triphosphates as substrates. The protein is DNA-directed RNA polymerase subunit beta of Enterobacter sp. (strain 638).